The sequence spans 640 residues: Threonine--tRNA ligase (640 aa).

Residues 1 to 59 (MKIKVVLPDGSEREYEKGTKPMEIAREVGIKKVIGAVVDEELWDLKRPLERDCRIRFVT) form the TGS domain. The catalytic stretch occupies residues 240 to 531 (DHRKLGPQLE…LIEHFAGAFP (292 aa)). Zn(2+)-binding residues include Cys332, His383, and His508.

This sequence belongs to the class-II aminoacyl-tRNA synthetase family. Homodimer. It depends on Zn(2+) as a cofactor.

It is found in the cytoplasm. The catalysed reaction is tRNA(Thr) + L-threonine + ATP = L-threonyl-tRNA(Thr) + AMP + diphosphate + H(+). Catalyzes the attachment of threonine to tRNA(Thr) in a two-step reaction: L-threonine is first activated by ATP to form Thr-AMP and then transferred to the acceptor end of tRNA(Thr). Also edits incorrectly charged L-seryl-tRNA(Thr). The chain is Threonine--tRNA ligase from Thermotoga neapolitana (strain ATCC 49049 / DSM 4359 / NBRC 107923 / NS-E).